The following is a 354-amino-acid chain: Uroporphyrinogen decarboxylase (354 aa).

Substrate-binding positions include 27 to 31 (RQAGR), aspartate 77, tyrosine 154, serine 209, and histidine 327.

It belongs to the uroporphyrinogen decarboxylase family. Homodimer.

The protein resides in the cytoplasm. The catalysed reaction is uroporphyrinogen III + 4 H(+) = coproporphyrinogen III + 4 CO2. It participates in porphyrin-containing compound metabolism; protoporphyrin-IX biosynthesis; coproporphyrinogen-III from 5-aminolevulinate: step 4/4. Functionally, catalyzes the decarboxylation of four acetate groups of uroporphyrinogen-III to yield coproporphyrinogen-III. This Shewanella frigidimarina (strain NCIMB 400) protein is Uroporphyrinogen decarboxylase.